The primary structure comprises 334 residues: Eukaryotic translation initiation factor 3 subunit H (334 aa).

Residues 21 to 155 (VQIDGLVVLK…LKAYRLTPKL (135 aa)) form the MPN domain. A disordered region spans residues 247–284 (RNVGKQQQQKHQYTQRKQQENLQRLSRGETPLPEEDVN). The span at 251 to 262 (KQQQQKHQYTQR) shows a compositional bias: low complexity.

This sequence belongs to the eIF-3 subunit H family. As to quaternary structure, component of the eukaryotic translation initiation factor 3 (eIF-3) complex, which is composed of 13 subunits: eif3a, eif3b, eif3c, eif3d, eif3e, eif3f, eif3g, eif3h, eif3i, eif3j, eif3k, eif3l and eif3m.

The protein resides in the cytoplasm. Its function is as follows. Component of the eukaryotic translation initiation factor 3 (eIF-3) complex, which is involved in protein synthesis of a specialized repertoire of mRNAs and, together with other initiation factors, stimulates binding of mRNA and methionyl-tRNAi to the 40S ribosome. The eIF-3 complex specifically targets and initiates translation of a subset of mRNAs involved in cell proliferation. The sequence is that of Eukaryotic translation initiation factor 3 subunit H (eif3h) from Xenopus laevis (African clawed frog).